We begin with the raw amino-acid sequence, 378 residues long: Ribosomal RNA large subunit methyltransferase G (378 aa).

This sequence belongs to the methyltransferase superfamily. RlmG family.

The protein localises to the cytoplasm. The catalysed reaction is guanosine(1835) in 23S rRNA + S-adenosyl-L-methionine = N(2)-methylguanosine(1835) in 23S rRNA + S-adenosyl-L-homocysteine + H(+). Functionally, specifically methylates the guanine in position 1835 (m2G1835) of 23S rRNA. This Shewanella putrefaciens (strain CN-32 / ATCC BAA-453) protein is Ribosomal RNA large subunit methyltransferase G.